The chain runs to 179 residues: Large ribosomal subunit protein uL5 (179 aa).

Belongs to the universal ribosomal protein uL5 family. As to quaternary structure, part of the 50S ribosomal subunit; part of the 5S rRNA/L5/L18/L25 subcomplex. Contacts the 5S rRNA and the P site tRNA. Forms a bridge to the 30S subunit in the 70S ribosome.

Functionally, this is one of the proteins that bind and probably mediate the attachment of the 5S RNA into the large ribosomal subunit, where it forms part of the central protuberance. In the 70S ribosome it contacts protein S13 of the 30S subunit (bridge B1b), connecting the 2 subunits; this bridge is implicated in subunit movement. Contacts the P site tRNA; the 5S rRNA and some of its associated proteins might help stabilize positioning of ribosome-bound tRNAs. The polypeptide is Large ribosomal subunit protein uL5 (Prochlorococcus marinus (strain SARG / CCMP1375 / SS120)).